We begin with the raw amino-acid sequence, 690 residues long: Subtilisin-like protease 1 (690 aa).

A signal peptide spans 1–25 (MMLNKKVVALCTLTLHLFCIFLCLG). A propeptide spans 26–219 (KEVRSEENGK…IESDKLVSAD (194 aa)) (inhibition peptide). The tract at residues 99-131 (EKNKNDNHNNNNNNNNISSSSSSSSNTFGEEKE) is disordered. Over residues 106–124 (HNNNNNNNNISSSSSSSSN) the composition is skewed to low complexity. Residue N114 is glycosylated (N-linked (GlcNAc...) asparagine). Ca(2+)-binding residues include N147, T150, and P152. N173 carries N-linked (GlcNAc...) asparagine glycosylation. Residue G207 participates in Ca(2+) binding. N263 carries an N-linked (GlcNAc...) asparagine glycan. Disordered regions lie at residues 266–286 (HAAT…DTFS) and 305–334 (NNNN…RPGK). Positions 305–330 (NNNNYYYSHSSNGHNSSSRNSSSSRS) are enriched in low complexity. N319 and N324 each carry an N-linked (GlcNAc...) asparagine glycan. E340 is a Ca(2+) binding site. Positions 345–663 (QWGLDLSRLD…AGYADINKAV (319 aa)) constitute a Peptidase S8 domain. Cystine bridges form between C371–C481 and C460–C477. Residue D374 is the Charge relay system of the active site. Ca(2+) contacts are provided by D383, E394, R398, F401, D402, D403, D404, N406, I408, D410, and D411. N419 carries N-linked (GlcNAc...) asparagine glycosylation. The active-site Charge relay system is H430. Residues I441, N444, I446, and V448 each contribute to the Ca(2+) site. 3 N-linked (GlcNAc...) asparagine glycosylation sites follow: N490, N503, and N522. Residues C523 and C536 are joined by a disulfide bond. The N-linked (GlcNAc...) asparagine glycan is linked to N605. Residue S608 is the Charge relay system of the active site. The N-linked (GlcNAc...) asparagine glycan is linked to N677.

Belongs to the peptidase S8 family. As to quaternary structure, heterodimer between p54 form and prodomain p31; the interaction inhibits p54 catalytic activity. Heterodimer p31-p54 is monomeric at basic pH and dimeric at acidic pH; dimerization is driven by the N-terminal prodomain (p31). It depends on Ca(2+) as a cofactor. The prodomain (p31) is cleaved, probably by autocatalysis, during the transport to or in the Golgi apparatus, and remains non-covalently associated with the p54 form as an inhibitor. p54 is further cleaved into the p47 form. This cleavage is likely occurring in the exoneme prior to egress and is mediated by PMX/plasmepsin X. The p54-to-p47 conversion can be also autocatalytic. Heterodimer p31-p54 is activated by cleavage of prodomain (p31) by the aspartic protease PMX; cleavage by PMX abolishes inhibitory capacity of p31. Primary autocatalytic processing of SUB1 is essential for parasite growth; the p54-to-p47 conversion is dispensable for SUB1 functions in the parasites. Post-translationally, the disulfide bond between Cys-523 and Cys-536 acts as a redox-sensitive disulfide switch. The oxidized form is required for catalytic activity. In terms of processing, the relevance of N-glycosylation is not clear. In an insect expression system, SUB1 glycosylation appears to affect its processing into the active mature form suggesting that SUB1 may not be N-glycosylated in parasites.

Its subcellular location is the secreted. It localises to the parasitophorous vacuole lumen. It carries out the reaction Hydrolysis of proteins with broad specificity for peptide bonds, and a preference for a large uncharged residue in P1. Hydrolyzes peptide amides.. Its activity is regulated as follows. p54 and probably p47 forms are inhibited by the non-covalent interaction with the cleaved propeptide. Inhibited by subtilisin propeptide-like protein SUB1-ProM. Inhibited by 3,4-dichloroisocoumarin (DCI) and 4-(hydroxymercuri)benzoic acid (pHMB). Partially inhibited by chymostatin, leupeptin, phenylmethylsulfonyl fluoride (PMSF), and 4-(2-aminoethyl)benzenesulfonyl fluoride. Functionally, serine protease which plays an essential role in merozoite invasion of and egress from host erythrocytes by processing and activating various merozoite surface and parasitophorous vacuole proteins. Mediates the proteolytic maturation of serine proteases SERA4, SERA5 and SERA6 just prior to merozoite egress. Prior to merozoite egress, cleaves merozoite surface proteins MSP1, MSP6 and MSP7, which form the MSP1/6/7 complex, and thereby may prime the parasite cell surface for invasion of fresh erythrocytes. Prior to merozoite egress, cleaves MSRP2 converting it to MSRP2 p25 form, and RAP1 converting it to RAP1 p67 form. The chain is Subtilisin-like protease 1 from Plasmodium falciparum.